Reading from the N-terminus, the 436-residue chain is Adenosylhomocysteinase (436 aa).

Positions 62, 136, and 161 each coordinate substrate. NAD(+) is bound at residue 162–164; sequence TTT. Residues lysine 191 and aspartate 195 each coordinate substrate. Residues asparagine 196, 225–230, glutamate 248, asparagine 283, 304–306, and asparagine 352 each bind NAD(+); these read GFGDVG and IGH.

It belongs to the adenosylhomocysteinase family. Requires NAD(+) as cofactor.

The protein localises to the cytoplasm. It catalyses the reaction S-adenosyl-L-homocysteine + H2O = L-homocysteine + adenosine. The protein operates within amino-acid biosynthesis; L-homocysteine biosynthesis; L-homocysteine from S-adenosyl-L-homocysteine: step 1/1. May play a key role in the regulation of the intracellular concentration of adenosylhomocysteine. This Leptospira interrogans serogroup Icterohaemorrhagiae serovar copenhageni (strain Fiocruz L1-130) protein is Adenosylhomocysteinase.